Here is a 388-residue protein sequence, read N- to C-terminus: Succinate--CoA ligase [ADP-forming] subunit beta (388 aa).

ATP-binding positions include Lys46, 53 to 55 (GRG), Glu99, Cys102, and Glu107. Residues Asn199 and Asp213 each contribute to the Mg(2+) site. Substrate-binding positions include Asn264 and 321-323 (GIV).

It belongs to the succinate/malate CoA ligase beta subunit family. In terms of assembly, heterotetramer of two alpha and two beta subunits. It depends on Mg(2+) as a cofactor.

The enzyme catalyses succinate + ATP + CoA = succinyl-CoA + ADP + phosphate. It carries out the reaction GTP + succinate + CoA = succinyl-CoA + GDP + phosphate. The protein operates within carbohydrate metabolism; tricarboxylic acid cycle; succinate from succinyl-CoA (ligase route): step 1/1. Succinyl-CoA synthetase functions in the citric acid cycle (TCA), coupling the hydrolysis of succinyl-CoA to the synthesis of either ATP or GTP and thus represents the only step of substrate-level phosphorylation in the TCA. The beta subunit provides nucleotide specificity of the enzyme and binds the substrate succinate, while the binding sites for coenzyme A and phosphate are found in the alpha subunit. The polypeptide is Succinate--CoA ligase [ADP-forming] subunit beta (Actinobacillus pleuropneumoniae serotype 5b (strain L20)).